The chain runs to 407 residues: S-adenosylmethionine synthase (407 aa).

H19 provides a ligand contact to ATP. D21 provides a ligand contact to Mg(2+). E47 provides a ligand contact to K(+). L-methionine is bound by residues E60 and Q103. The tract at residues Q103 to T113 is flexible loop. Positions A108–A131 are disordered. ATP-binding positions include D178–K180, D258, R264–K265, A281, and K285. L-methionine is bound at residue D258. K289 serves as a coordination point for L-methionine.

Belongs to the AdoMet synthase family. As to quaternary structure, homotetramer; dimer of dimers. The cofactor is Mg(2+). It depends on K(+) as a cofactor.

The protein resides in the cytoplasm. It carries out the reaction L-methionine + ATP + H2O = S-adenosyl-L-methionine + phosphate + diphosphate. It participates in amino-acid biosynthesis; S-adenosyl-L-methionine biosynthesis; S-adenosyl-L-methionine from L-methionine: step 1/1. Catalyzes the formation of S-adenosylmethionine (AdoMet) from methionine and ATP. The overall synthetic reaction is composed of two sequential steps, AdoMet formation and the subsequent tripolyphosphate hydrolysis which occurs prior to release of AdoMet from the enzyme. This chain is S-adenosylmethionine synthase, found in Corynebacterium efficiens (strain DSM 44549 / YS-314 / AJ 12310 / JCM 11189 / NBRC 100395).